Consider the following 231-residue polypeptide: uncharacterized protein (231 aa).

Residue 10 to 34 (VVTGAGSGIGEAIATLLHEEGAKVV) participates in NADP(+) binding. Ser-140 is a substrate binding site. Tyr-153 acts as the Proton acceptor in catalysis.

The protein belongs to the short-chain dehydrogenases/reductases (SDR) family.

This is an uncharacterized protein from Staphylococcus aureus (strain COL).